The chain runs to 220 residues: Iron-sulfur cluster repair protein YtfE (220 aa).

The protein belongs to the RIC family. YtfE subfamily. In terms of assembly, homodimer.

The protein localises to the cytoplasm. Di-iron-containing protein involved in the repair of iron-sulfur clusters damaged by oxidative and nitrosative stress conditions. The sequence is that of Iron-sulfur cluster repair protein YtfE from Salmonella typhimurium (strain LT2 / SGSC1412 / ATCC 700720).